Here is a 471-residue protein sequence, read N- to C-terminus: UDP-N-acetylmuramate--L-alanine ligase (471 aa).

Residue 114-120 (GTHGKTT) coordinates ATP.

This sequence belongs to the MurCDEF family.

The protein resides in the cytoplasm. The catalysed reaction is UDP-N-acetyl-alpha-D-muramate + L-alanine + ATP = UDP-N-acetyl-alpha-D-muramoyl-L-alanine + ADP + phosphate + H(+). Its pathway is cell wall biogenesis; peptidoglycan biosynthesis. Functionally, cell wall formation. This chain is UDP-N-acetylmuramate--L-alanine ligase, found in Allorhizobium ampelinum (strain ATCC BAA-846 / DSM 112012 / S4) (Agrobacterium vitis (strain S4)).